The sequence spans 267 residues: 3-methyl-2-oxobutanoate hydroxymethyltransferase (267 aa).

The Mg(2+) site is built by D42 and D86. 3-methyl-2-oxobutanoate is bound by residues 42-43 (DS), D86, and K116. E118 contacts Mg(2+). E185 acts as the Proton acceptor in catalysis.

Belongs to the PanB family. As to quaternary structure, homodecamer; pentamer of dimers. The cofactor is Mg(2+).

It is found in the cytoplasm. The enzyme catalyses 3-methyl-2-oxobutanoate + (6R)-5,10-methylene-5,6,7,8-tetrahydrofolate + H2O = 2-dehydropantoate + (6S)-5,6,7,8-tetrahydrofolate. It functions in the pathway cofactor biosynthesis; (R)-pantothenate biosynthesis; (R)-pantoate from 3-methyl-2-oxobutanoate: step 1/2. Its function is as follows. Catalyzes the reversible reaction in which hydroxymethyl group from 5,10-methylenetetrahydrofolate is transferred onto alpha-ketoisovalerate to form ketopantoate. This Parasynechococcus marenigrum (strain WH8102) protein is 3-methyl-2-oxobutanoate hydroxymethyltransferase.